A 54-amino-acid polypeptide reads, in one-letter code: Large ribosomal subunit protein bL33A (54 aa).

The protein belongs to the bacterial ribosomal protein bL33 family.

The chain is Large ribosomal subunit protein bL33A from Mycobacterium marinum (strain ATCC BAA-535 / M).